The chain runs to 417 residues: Aminoacyltransferase FemB (417 aa).

The protein belongs to the FemABX family.

It localises to the cytoplasm. The catalysed reaction is MurNAc-L-Ala-D-isoglutaminyl-L-Lys-(N(6)-tri-Gly)-D-Ala-D-Ala-diphospho-di-trans,octa-cis-undecaprenyl-GlcNAc + 2 glycyl-tRNA(Gly) = MurNAc-L-Ala-D-isoglutaminyl-L-Lys-(N(6)-penta-Gly)-D-Ala-D-Ala-diphospho-di-trans,octa-cis-undecaprenyl-GlcNAc + 2 tRNA(Gly) + 2 H(+). In terms of biological role, catalyzes the incorporation of amino acid(s) into the interchain peptide bridge of peptidoglycan, using aminoacyl-tRNA as amino acid donor. The chain is Aminoacyltransferase FemB (femB) from Staphylococcus epidermidis (strain ATCC 35984 / DSM 28319 / BCRC 17069 / CCUG 31568 / BM 3577 / RP62A).